The primary structure comprises 176 residues: Cytochrome b (176 aa).

The next 3 membrane-spanning stretches (helical) occupy residues 33–53 (FGSL…FLAM), 77–98 (WLLR…YLHI), and 113–133 (WNVG…GYVL). Heme b-binding residues include His83 and His97.

This sequence belongs to the cytochrome b family. In terms of assembly, the cytochrome bc1 complex contains 11 subunits: 3 respiratory subunits (MT-CYB, CYC1 and UQCRFS1), 2 core proteins (UQCRC1 and UQCRC2) and 6 low-molecular weight proteins (UQCRH/QCR6, UQCRB/QCR7, UQCRQ/QCR8, UQCR10/QCR9, UQCR11/QCR10 and a cleavage product of UQCRFS1). This cytochrome bc1 complex then forms a dimer. Heme b serves as cofactor.

Its subcellular location is the mitochondrion inner membrane. Functionally, component of the ubiquinol-cytochrome c reductase complex (complex III or cytochrome b-c1 complex) that is part of the mitochondrial respiratory chain. The b-c1 complex mediates electron transfer from ubiquinol to cytochrome c. Contributes to the generation of a proton gradient across the mitochondrial membrane that is then used for ATP synthesis. The chain is Cytochrome b (MT-CYB) from Nyctinomops aurispinosus (Peale's free-tailed bat).